The sequence spans 235 residues: Myb family transcription factor PHL12 (235 aa).

Residues 1 to 12 show a composition bias toward basic and acidic residues; that stretch reads MMQSREEIRDDS. Residues 1–20 are disordered; that stretch reads MMQSREEIRDDSSSGLVLTT. Residues 20–80 enclose the HTH myb-type domain; the sequence is TDPKPRLRWT…HLQKFRLGKQ (61 aa). The segment at residues 51–76 is a DNA-binding region (H-T-H motif); sequence PKTIMRVMGVKGLTLYHLKSHLQKFR. The coiled coil stretch occupies residues 119 to 139; the sequence is RNMNEMQMEVQRRIEEEVVIE.

Belongs to the MYB-CC family. Expressed in phloem and/or cambium.

It is found in the nucleus. This Arabidopsis thaliana (Mouse-ear cress) protein is Myb family transcription factor PHL12.